We begin with the raw amino-acid sequence, 237 residues long: Cysteine-rich venom protein DIS3 (237 aa).

A signal peptide spans 1-18 (MFVFILLSLAAVLQQSFG). Positions 37-165 (VDKHNAFRRS…SYDYFYVCQY (129 aa)) constitute an SCP domain. 7 disulfide bridges follow: Cys74–Cys152, Cys91–Cys166, Cys147–Cys163, Cys185–Cys192, Cys188–Cys197, Cys201–Cys234, and Cys219–Cys232. The region spanning 201-234 (CSREDVFTNCKSLVAKSNCQDDYIRKNCLATCFC) is the ShKT domain.

The protein belongs to the CRISP family. Expressed by the venom gland.

The protein localises to the secreted. In terms of biological role, weakly blocks contraction of smooth muscle elicited by high potassium-induced depolarization, but does not block caffeine-stimulated contraction. May target voltage-gated calcium channels on smooth muscle. The protein is Cysteine-rich venom protein DIS3 of Dispholidus typus (Boomslang).